Reading from the N-terminus, the 241-residue chain is Histone H1-II (241 aa).

Over residues 1–10 (MASDAPEVKA) the composition is skewed to basic and acidic residues. 2 disordered regions span residues 1 to 27 (MASD…THPP) and 89 to 241 (NSYK…AKKA). Positions 11 to 20 (PKAKTQKKPK) are enriched in basic residues. Residues 24–95 (THPPYIQMVT…KVKNSYKLSD (72 aa)) enclose the H15 domain. The segment covering 99–111 (SKAKAAAKPKAAP) has biased composition (basic residues). A run of 3 repeats spans residues 111–116 (PKKAAA), 117–122 (PKKAAA), and 123–128 (PKKAKA). Positions 111-217 (PKKAAAPKKA…KAATPKKAKA (107 aa)) are 8 X 6 AA repeats of P-K-K-A-[AK]-A. Residues 129–155 (PKKEGEKKAVKPKSEKKAAKPKTEKKP) show a composition bias toward basic and acidic residues. Composition is skewed to basic residues over residues 156–184 (KAAK…KATP) and 194–241 (AAPK…AKKA). A DNA-binding region spans residues 183 to 186 (TPKK). A run of 5 repeats spans residues 184 to 189 (PKKAAA), 190 to 195 (PKKAAA), 196 to 201 (PKKAKA), 204 to 209 (PKKAKA), and 212 to 217 (PKKAKA). 2 consecutive DNA-binding regions follow at residues 203–206 (TPKK) and 211–214 (TPKK).

The protein belongs to the histone H1/H5 family.

Its subcellular location is the nucleus. It localises to the chromosome. Functionally, histones H1 are necessary for the condensation of nucleosome chains into higher-order structures. The protein is Histone H1-II (H1-II) of Volvox carteri (Green alga).